The following is a 360-amino-acid chain: Nucleoporin SEH1 (360 aa).

WD repeat units lie at residues 10–49 (DHKDLIHDVSFDFHGRRMATCSSDQSVKVWDKSESGEWHC), 55–96 (THSG…SNDK), 111–152 (DSRT…NLSQ), 160–210 (SCKL…RKYA), 217–258 (TVTD…KELT), and 276–315 (NHNSQVWRVSWNITGTVLASSGDDGCVRLWKANYMDNWKC). Lys12 is covalently cross-linked (Glycyl lysine isopeptide (Lys-Gly) (interchain with G-Cter in SUMO2)). Ser190 is subject to Phosphoserine. The segment covering 324-342 (SPVNGSSQQGNSNPSVGSN) has biased composition (low complexity). A disordered region spans residues 324–360 (SPVNGSSQQGNSNPSVGSNIPSLQNSLNGSSAGRKHS). Residues 343–354 (IPSLQNSLNGSS) show a composition bias toward polar residues.

It belongs to the WD repeat SEC13 family. Component of the Nup107-160 subcomplex of the nuclear pore complex (NPC). The Nup107-160 subcomplex includes NUP160, NUP133, NUP107, NUP98, NUP85, NUP43, NUP37, SEH1 and SEC13. The SEH1 subunit appears to be only weakly associated with the Nup107-160 subcomplex. Component of the GATOR2 subcomplex, composed of MIOS, SEC13, SEH1L, WDR24 and WDR59. The GATOR2 complex interacts with CASTOR1 and CASTOR2; the interaction is negatively regulated by arginine. The GATOR2 complex interacts with SESN1, SESN2 and SESN3; the interaction is negatively regulated by amino acids. SESN1, SESN2 and SESN3 convey leucine availability via direct interaction with SEH1L and WDR24.

It is found in the chromosome. It localises to the centromere. The protein resides in the kinetochore. Its subcellular location is the nucleus. The protein localises to the nuclear pore complex. It is found in the lysosome membrane. Its activity is regulated as follows. The GATOR2 complex is negatively regulated by the upstream amino acid sensors CASTOR1 and SESN2, which sequester the GATOR2 complex in absence of amino acids. In the presence of abundant amino acids, GATOR2 is released from CASTOR1 and SESN2 and activated. Component of the Nup107-160 subcomplex of the nuclear pore complex (NPC). The Nup107-160 subcomplex is required for the assembly of a functional NPC. The Nup107-160 subcomplex is also required for normal kinetochore microtubule attachment, mitotic progression and chromosome segregation. This subunit plays a role in recruitment of the Nup107-160 subcomplex to the kinetochore. Its function is as follows. As a component of the GATOR2 complex, functions as an activator of the amino acid-sensing branch of the mTORC1 signaling pathway. The GATOR2 complex indirectly activates mTORC1 through the inhibition of the GATOR1 subcomplex. GATOR2 probably acts as an E3 ubiquitin-protein ligase toward GATOR1. In the presence of abundant amino acids, the GATOR2 complex mediates ubiquitination of the NPRL2 core component of the GATOR1 complex, leading to GATOR1 inactivation. In the absence of amino acids, GATOR2 is inhibited, activating the GATOR1 complex. Within the GATOR2 complex, SEC13 and SEH1L are required to stabilize the complex. This is Nucleoporin SEH1 (SEH1L) from Bos taurus (Bovine).